The chain runs to 236 residues: Large ribosomal subunit protein eL6 (236 aa).

Belongs to the eukaryotic ribosomal protein eL6 family.

The chain is Large ribosomal subunit protein eL6 (rpl6) from Dictyostelium discoideum (Social amoeba).